A 326-amino-acid chain; its full sequence is Probable major capsid protein gp17 (326 aa).

This sequence belongs to the L5likevirus major capsid protein gp17 family. As to quaternary structure, L5 head shells are composed of gp17 subunits that are extensively cross-linked.

It is found in the virion. The polypeptide is Probable major capsid protein gp17 (17) (Mycobacterium (Mycobacteriophage L5)).